The chain runs to 378 residues: Queuine tRNA-ribosyltransferase (378 aa).

Asp91 acts as the Proton acceptor in catalysis. Substrate contacts are provided by residues 91 to 95 (DSGGF), Asp145, Gln197, and Gly224. The active-site Nucleophile is the Asp274. The interval 279-283 (TRLAR) is RNA binding; important for wobble base 34 recognition. Zn(2+)-binding residues include Cys312, Cys314, Cys317, and His343.

This sequence belongs to the queuine tRNA-ribosyltransferase family. Homodimer. Within each dimer, one monomer is responsible for RNA recognition and catalysis, while the other monomer binds to the replacement base PreQ1. It depends on Zn(2+) as a cofactor.

It catalyses the reaction 7-aminomethyl-7-carbaguanine + guanosine(34) in tRNA = 7-aminomethyl-7-carbaguanosine(34) in tRNA + guanine. Its pathway is tRNA modification; tRNA-queuosine biosynthesis. In terms of biological role, catalyzes the base-exchange of a guanine (G) residue with the queuine precursor 7-aminomethyl-7-deazaguanine (PreQ1) at position 34 (anticodon wobble position) in tRNAs with GU(N) anticodons (tRNA-Asp, -Asn, -His and -Tyr). Catalysis occurs through a double-displacement mechanism. The nucleophile active site attacks the C1' of nucleotide 34 to detach the guanine base from the RNA, forming a covalent enzyme-RNA intermediate. The proton acceptor active site deprotonates the incoming PreQ1, allowing a nucleophilic attack on the C1' of the ribose to form the product. After dissociation, two additional enzymatic reactions on the tRNA convert PreQ1 to queuine (Q), resulting in the hypermodified nucleoside queuosine (7-(((4,5-cis-dihydroxy-2-cyclopenten-1-yl)amino)methyl)-7-deazaguanosine). In Methylacidiphilum infernorum (isolate V4) (Methylokorus infernorum (strain V4)), this protein is Queuine tRNA-ribosyltransferase.